The chain runs to 338 residues: Methionine synthase (338 aa).

Zn(2+) contacts are provided by His210, Cys212, Glu234, and Cys294.

It belongs to the archaeal MetE family. The cofactor is Zn(2+).

Its pathway is amino-acid biosynthesis; L-methionine biosynthesis via de novo pathway. Catalyzes the transfer of a methyl group to L-homocysteine resulting in methionine formation. The physiological methyl donor is unknown. This Pyrococcus furiosus (strain ATCC 43587 / DSM 3638 / JCM 8422 / Vc1) protein is Methionine synthase.